Reading from the N-terminus, the 901-residue chain is Protein translocase subunit SecA (901 aa).

ATP-binding positions include glutamine 87, 105–109, and aspartate 512; that span reads GEGKT. Residues 868-901 are disordered; sequence AALAAQTGERKVGRNDPCPCGSGKKYKQCHGRLQ. Residues cysteine 885, cysteine 887, cysteine 896, and histidine 897 each contribute to the Zn(2+) site. Residues 891–901 are compositionally biased toward basic residues; it reads KKYKQCHGRLQ.

The protein belongs to the SecA family. Monomer and homodimer. Part of the essential Sec protein translocation apparatus which comprises SecA, SecYEG and auxiliary proteins SecDF-YajC and YidC. It depends on Zn(2+) as a cofactor.

It localises to the cell inner membrane. It is found in the cytoplasm. It carries out the reaction ATP + H2O + cellular proteinSide 1 = ADP + phosphate + cellular proteinSide 2.. Part of the Sec protein translocase complex. Interacts with the SecYEG preprotein conducting channel. Has a central role in coupling the hydrolysis of ATP to the transfer of proteins into and across the cell membrane, serving both as a receptor for the preprotein-SecB complex and as an ATP-driven molecular motor driving the stepwise translocation of polypeptide chains across the membrane. This chain is Protein translocase subunit SecA, found in Escherichia coli O45:K1 (strain S88 / ExPEC).